Consider the following 858-residue polypeptide: Translation initiation factor IF-2 (858 aa).

The interval 49 to 271 (TTTVTHPKSQ…NKPAPVRKDK (223 aa)) is disordered. Over residues 80-226 (NQQQSNSRHQ…RFGGSLNSNN (147 aa)) the composition is skewed to low complexity. A compositionally biased stretch (basic residues) spans 239–256 (NRRRNNRNNKSRNNKNQR). One can recognise a tr-type G domain in the interval 359–528 (PRAPVVTVMG…LLQSEVLELT (170 aa)). The segment at 368–375 (GHVDHGKT) is G1. Position 368–375 (368–375 (GHVDHGKT)) interacts with GTP. A G2 region spans residues 393-397 (GITQA). The tract at residues 414-417 (DTPG) is G3. GTP is bound by residues 414-418 (DTPGH) and 468-471 (NKID). A G4 region spans residues 468–471 (NKID). The interval 504–506 (SAK) is G5.

This sequence belongs to the TRAFAC class translation factor GTPase superfamily. Classic translation factor GTPase family. IF-2 subfamily.

Its subcellular location is the cytoplasm. Its function is as follows. One of the essential components for the initiation of protein synthesis. Protects formylmethionyl-tRNA from spontaneous hydrolysis and promotes its binding to the 30S ribosomal subunits. Also involved in the hydrolysis of GTP during the formation of the 70S ribosomal complex. The polypeptide is Translation initiation factor IF-2 (Lactiplantibacillus plantarum (strain ATCC BAA-793 / NCIMB 8826 / WCFS1) (Lactobacillus plantarum)).